The chain runs to 473 residues: Glutathione reductase, mitochondrial (473 aa).

The FAD site is built by Ser30 and Gly31. Ser30 contributes to the glutathione binding site. Residue Arg37 coordinates glutathione. 4 residues coordinate FAD: Glu50, Thr57, Cys58, and Lys66. Residues Cys58 and Cys63 are joined by a disulfide bond. Tyr114 serves as a coordination point for glutathione. Ala130 lines the FAD pocket. Residues Ala190, Ile193, Glu196, Arg213, Arg219, and Gly279 each coordinate NADP(+). FAD is bound at residue Asp320. Leu326 contributes to the NADP(+) binding site. Residue Thr328 coordinates FAD. Arg336 serves as a coordination point for glutathione. Val359 serves as a coordination point for NADP(+). His456 is an FAD binding site. Catalysis depends on His456, which acts as the Proton acceptor.

This sequence belongs to the class-I pyridine nucleotide-disulfide oxidoreductase family. FAD serves as cofactor. Expressed at all larval stages and in adults in intestine, vulva muscle, pharynx and some cells in the tail.

The protein localises to the cytoplasm. The protein resides in the mitochondrion. The enzyme catalyses 2 glutathione + NADP(+) = glutathione disulfide + NADPH + H(+). Its function is as follows. Catalyzes the reduction of glutathione disulfide (GSSG) to reduced glutathione (GSH). Constitutes the major mechanism to maintain a high GSH:GSSG ratio in the cytosol. Involved in resistance to oxidative stress and starvation. Together with thioredoxin reductase txtr-1, required for the reduction of disulfide groups in the cuticle during molting. The polypeptide is Glutathione reductase, mitochondrial (Caenorhabditis elegans).